A 154-amino-acid polypeptide reads, in one-letter code: Ribonuclease HI (154 aa).

Residues 1-142 (MTKHVEIFTD…CDELARTAAE (142 aa)) enclose the RNase H type-1 domain. Mg(2+) is bound by residues aspartate 10, glutamate 48, aspartate 70, and aspartate 134.

It belongs to the RNase H family. As to quaternary structure, monomer. It depends on Mg(2+) as a cofactor.

Its subcellular location is the cytoplasm. It catalyses the reaction Endonucleolytic cleavage to 5'-phosphomonoester.. In terms of biological role, endonuclease that specifically degrades the RNA of RNA-DNA hybrids. The sequence is that of Ribonuclease HI from Vibrio parahaemolyticus serotype O3:K6 (strain RIMD 2210633).